The sequence spans 769 residues: 3-O-beta-D-glucopyranosyl-beta-D-glucuronide phosphorylase (769 aa).

Residue Asp457 is the Proton donor of the active site.

This sequence belongs to the glycosyl hydrolase 94 family. As to quaternary structure, homodimer.

It is found in the cytoplasm. The catalysed reaction is 3-O-beta-D-glucosyl-D-glucuronate + phosphate = aldehydo-D-glucuronate + alpha-D-glucose 1-phosphate. It catalyses the reaction a 3-O-beta-D-glucosyl-beta-D-glucuronoside + phosphate = a beta-D-glucuronoside + alpha-D-glucose 1-phosphate. Glycoside phosphorylase that catalyzes the reversible phosphorolysis of 3-O-beta-D-glucosyl-D-glucuronate into D-glucuronic acid and alpha-D-glucose 1-phosphate. Cannot phosphorolyze cellobionic acid and laminaribiose. In the reverse direction, using alpha-D-glucose 1-phosphate as a donor substrate, the enzyme acts on D-glucuronate and its artificial derivative p-nitrophenyl-beta-D-glucuronide. The apparent catalytic efficiency towards p-nitrophenyl-beta-D-glucuronide is approximately 5-fold higher than that towards D-glucuronic acid. Is probably involved in the metabolism of oligosaccharides containing the 3-O-beta-D-glucopyranosyl-beta-D-glucuronide structure released from bacterial and plant acidic carbohydrates. The protein is 3-O-beta-D-glucopyranosyl-beta-D-glucuronide phosphorylase of Paenibacillus borealis.